The following is a 270-amino-acid chain: Myelin protein zero-like protein 1 (270 aa).

Residues methionine 1–isoleucine 35 form the signal peptide. The region spanning serine 36–arginine 151 is the Ig-like V-type domain. Topologically, residues serine 36–valine 162 are extracellular. Residues asparagine 50 and asparagine 130 are each glycosylated (N-linked (GlcNAc...) asparagine). Cysteine 58 and cysteine 135 are oxidised to a cystine. The chain crosses the membrane as a helical span at residues phenylalanine 163–isoleucine 183. Residues serine 184–aspartate 270 lie on the Cytoplasmic side of the membrane. The disordered stretch occupies residues threonine 201–asparagine 257. Serine 204, serine 206, serine 210, and serine 221 each carry phosphoserine. An ITIM motif 1 motif is present at residues valine 240–leucine 245. Tyrosine 242 carries the post-translational modification Phosphotyrosine. Position 261 is a phosphoserine (serine 261). The ITIM motif 2 signature appears at valine 262–isoleucine 267. Tyrosine 264 is modified (phosphotyrosine).

The protein belongs to the myelin P0 protein family. As to quaternary structure, interacts with phosphorylated PTPN11/SHP-2. In terms of processing, phosphorylated on tyrosine residues upon stimulation with pervanadate and concanavalin-A (ConA). Phosphorylation at Tyr-242 and Tyr-264 is required for interaction with PTPN11/SHP-2. Dephosphorylated by PTPN11/SHP-2 (in vitro). N-glycosylated.

The protein localises to the membrane. Cell surface receptor, which is involved in signal transduction processes. Recruits PTPN11/SHP-2 to the cell membrane and is a putative substrate of PTPN11/SHP-2. Is a major receptor for concanavalin-A (ConA) and is involved in cellular signaling induced by ConA, which probably includes Src family tyrosine-protein kinases. May be involved in regulation of integrin-mediated cell motility. The sequence is that of Myelin protein zero-like protein 1 (Mpzl1) from Rattus norvegicus (Rat).